The primary structure comprises 98 residues: DNA-binding protein Fis (98 aa).

A DNA-binding region (H-T-H motif) is located at residues 74–93 (QTRAALMMGINRGTLRKKLK).

Belongs to the transcriptional regulatory Fis family. As to quaternary structure, homodimer.

Functionally, activates ribosomal RNA transcription. Plays a direct role in upstream activation of rRNA promoters. The protein is DNA-binding protein Fis of Yersinia enterocolitica serotype O:8 / biotype 1B (strain NCTC 13174 / 8081).